Here is a 411-residue protein sequence, read N- to C-terminus: Phosphopentomutase (411 aa).

Mn(2+) is bound by residues D14, D306, H311, D347, H348, and H359.

The protein belongs to the phosphopentomutase family. It depends on Mn(2+) as a cofactor.

It localises to the cytoplasm. The enzyme catalyses 2-deoxy-alpha-D-ribose 1-phosphate = 2-deoxy-D-ribose 5-phosphate. It carries out the reaction alpha-D-ribose 1-phosphate = D-ribose 5-phosphate. It functions in the pathway carbohydrate degradation; 2-deoxy-D-ribose 1-phosphate degradation; D-glyceraldehyde 3-phosphate and acetaldehyde from 2-deoxy-alpha-D-ribose 1-phosphate: step 1/2. Isomerase that catalyzes the conversion of deoxy-ribose 1-phosphate (dRib-1-P) and ribose 1-phosphate (Rib-1-P) to deoxy-ribose 5-phosphate (dRib-5-P) and ribose 5-phosphate (Rib-5-P), respectively. This Lactococcus lactis subsp. cremoris (strain SK11) protein is Phosphopentomutase.